The following is a 301-amino-acid chain: Diaminopimelate epimerase (301 aa).

Residues Asn15, Gln47, and Asn67 each contribute to the substrate site. Cys76 acts as the Proton donor in catalysis. Substrate is bound by residues 77–78 (GN), Asn163, Asn197, and 215–216 (ER). The active-site Proton acceptor is Cys224. 225–226 (GS) lines the substrate pocket. A disordered region spans residues 280 to 301 (SGSLDPSTGLWSRDGTQEAGAR).

It belongs to the diaminopimelate epimerase family. Homodimer.

The protein localises to the cytoplasm. It carries out the reaction (2S,6S)-2,6-diaminopimelate = meso-2,6-diaminopimelate. Its pathway is amino-acid biosynthesis; L-lysine biosynthesis via DAP pathway; DL-2,6-diaminopimelate from LL-2,6-diaminopimelate: step 1/1. In terms of biological role, catalyzes the stereoinversion of LL-2,6-diaminopimelate (L,L-DAP) to meso-diaminopimelate (meso-DAP), a precursor of L-lysine and an essential component of the bacterial peptidoglycan. This is Diaminopimelate epimerase from Rhizobium leguminosarum bv. trifolii (strain WSM2304).